Here is a 132-residue protein sequence, read N- to C-terminus: Protein NrdI (132 aa).

It belongs to the NrdI family.

Functionally, probably involved in ribonucleotide reductase function. The polypeptide is Protein NrdI (Bartonella quintana (strain Toulouse) (Rochalimaea quintana)).